We begin with the raw amino-acid sequence, 733 residues long: SWR1-complex protein 4 (733 aa).

2 disordered regions span residues 1–34 (MTSHDVRDVLNLPSDHAGPRPSKKARTATPRPNL) and 98–128 (PDGTVQDGSAEGQDSAATADNSADKPEDSSF). The SANT domain occupies 146–217 (NTNLKHPDWT…DLKARYYEVA (72 aa)). The stretch at 247–299 (KQEQNRKRFAENTLKRSSDEAREEEALLLEIKRIMARTERFNEERRELYNRLD) forms a coiled coil. Positions 371-384 (AASRRESLAASSTA) are enriched in low complexity. Disordered stretches follow at residues 371 to 488 (AASR…GSGP) and 564 to 733 (KKAE…KQKK). Basic and acidic residues-rich tracts occupy residues 387 to 423 (NDHHEPPVREPPVRHERQESRSHHRNESRSERADRHG), 463 to 484 (PERRKLSEHEEQVYGVSHHDRL), 564 to 589 (KKAERERAAREAAEARGETVEKKGGE), and 610 to 653 (DDAK…KGEE). Residues 699–710 (GSSSGAGASSGA) show a composition bias toward low complexity.

It belongs to the SWC4 family. In terms of assembly, component of the SWR1 chromatin-remodeling complex and of the NuA4 histone acetyltransferase complex.

It is found in the nucleus. Functionally, component of the SWR1 complex which mediates the ATP-dependent exchange of histone H2A for the H2A variant H2A.Z leading to transcriptional regulation of selected genes by chromatin remodeling. Component of the NuA4 histone acetyltransferase complex which is involved in transcriptional activation of selected genes principally by acetylation of nucleosomal histone H4 and H2A. The NuA4 complex is also involved in DNA repair. In Neurospora crassa (strain ATCC 24698 / 74-OR23-1A / CBS 708.71 / DSM 1257 / FGSC 987), this protein is SWR1-complex protein 4 (crc-1).